The following is a 264-amino-acid chain: MSLSKVSVENSLKPEKFVKISWVDKLLPNYFSILKYLSITDFSVVKAQSYESLVPVKLLRGVDLTKHLYVTLLGVVVSGVWNVPESCRGGATVALVDTRMHSVAEGTICKFSAPATVREFSVRFIPNYSVVAADALRDPWSLFVRLSNVGIKDGFHPLTLEVACLVATTNSIIKKGLRASVVESVVSSDQSIVLDSLSEKVEPFFDKVPISAAVMARDPSYRSRSQSVSGRGKRHSKPPNRRLDSASEESSSVSFDDGLQSDHT.

The interval 221–264 (YRSRSQSVSGRGKRHSKPPNRRLDSASEESSSVSFDDGLQSDHT) is disordered. Positions 231-240 (RGKRHSKPPN) are enriched in basic residues.

This sequence belongs to the tobamovirus movement protein family.

It localises to the host cytoplasm. Its subcellular location is the host cytoskeleton. The protein resides in the host cell junction. The protein localises to the host plasmodesma. Its function is as follows. Transports viral genome to neighboring plant cells directly through plasmosdesmata, without any budding. The movement protein allows efficient cell to cell propagation, by bypassing the host cell wall barrier. Forms a ribonucleoprotein complex with viral RNA. Binds microtubules and modulates microtubule stability. Can bind double-stranded DNA. The protein is Movement protein (MP) of Citrullus (Cucumber).